The following is a 430-amino-acid chain: Phosphomethylpyrimidine synthase (430 aa).

Substrate-binding positions include Asn67, Met96, Tyr125, His161, Ser183 to Gly185, Asp224 to Arg227, and Glu263. Position 267 (His267) interacts with Zn(2+). Tyr290 provides a ligand contact to substrate. His331 contacts Zn(2+). Positions 406, 409, and 413 each coordinate [4Fe-4S] cluster.

The protein belongs to the ThiC family. In terms of assembly, homodimer. [4Fe-4S] cluster serves as cofactor.

It carries out the reaction 5-amino-1-(5-phospho-beta-D-ribosyl)imidazole + S-adenosyl-L-methionine = 4-amino-2-methyl-5-(phosphooxymethyl)pyrimidine + CO + 5'-deoxyadenosine + formate + L-methionine + 3 H(+). Its pathway is cofactor biosynthesis; thiamine diphosphate biosynthesis. Catalyzes the synthesis of the hydroxymethylpyrimidine phosphate (HMP-P) moiety of thiamine from aminoimidazole ribotide (AIR) in a radical S-adenosyl-L-methionine (SAM)-dependent reaction. In Campylobacter jejuni subsp. jejuni serotype O:6 (strain 81116 / NCTC 11828), this protein is Phosphomethylpyrimidine synthase.